The following is a 253-amino-acid chain: Imidazole glycerol phosphate synthase subunit HisF (253 aa).

Residues Asp-11 and Asp-130 contribute to the active site.

The protein belongs to the HisA/HisF family. Heterodimer of HisH and HisF.

Its subcellular location is the cytoplasm. It catalyses the reaction 5-[(5-phospho-1-deoxy-D-ribulos-1-ylimino)methylamino]-1-(5-phospho-beta-D-ribosyl)imidazole-4-carboxamide + L-glutamine = D-erythro-1-(imidazol-4-yl)glycerol 3-phosphate + 5-amino-1-(5-phospho-beta-D-ribosyl)imidazole-4-carboxamide + L-glutamate + H(+). It functions in the pathway amino-acid biosynthesis; L-histidine biosynthesis; L-histidine from 5-phospho-alpha-D-ribose 1-diphosphate: step 5/9. Functionally, IGPS catalyzes the conversion of PRFAR and glutamine to IGP, AICAR and glutamate. The HisF subunit catalyzes the cyclization activity that produces IGP and AICAR from PRFAR using the ammonia provided by the HisH subunit. This Caldanaerobacter subterraneus subsp. tengcongensis (strain DSM 15242 / JCM 11007 / NBRC 100824 / MB4) (Thermoanaerobacter tengcongensis) protein is Imidazole glycerol phosphate synthase subunit HisF.